Consider the following 777-residue polypeptide: Double zinc ribbon and ankyrin repeat-containing protein 1 (777 aa).

The span at 161–176 (QVGERTDPKTLKDLRF) shows a compositional bias: basic and acidic residues. Residues 161-202 (QVGERTDPKTLKDLRFSESPLEIPAHSGGSGSRPPTRQSQSP) form a disordered region. Over residues 193-202 (RPPTRQSQSP) the composition is skewed to polar residues. At S201 the chain carries Phosphoserine. 2 DZANK-type zinc fingers span residues 230 to 289 (CAHC…CVVC) and 358 to 406 (CSRC…GSCG). 2 ANK repeats span residues 442-473 (NIPL…LLAK) and 477-506 (EIAS…GYWR).

In terms of assembly, interacts with NINL. Associates with DYNC1H1 and multiple dynein intermediate and light chains as well as actin-binding proteins.

Its subcellular location is the cytoplasm. The protein localises to the cytoskeleton. It localises to the microtubule organizing center. It is found in the centrosome. The protein resides in the cilium basal body. Functionally, involved in vesicle transport in photoreceptor cells. The protein is Double zinc ribbon and ankyrin repeat-containing protein 1 (DZANK1) of Macaca fascicularis (Crab-eating macaque).